We begin with the raw amino-acid sequence, 1533 residues long: Actin cytoskeleton-regulatory complex protein pan-1 (1533 aa).

Residues Met1–Thr204 are disordered. Low complexity-rich tracts occupy residues Gln19 to Gly46, Gly53 to Gly136, Ile143 to Pro170, and Gln177 to Ile193. The EH 1 domain maps to Asp244–Met333. The EF-hand 1 domain maps to Leu277–Lys312. Over residues Ala345 to Ala359 the composition is skewed to low complexity. Disordered regions lie at residues Ala345–Ser378 and Gln393–Gly423. Polar residues-rich tracts occupy residues Thr360–Ser378 and Gln393–Gly410. An EH 2 domain is found at Glu513 to Asn602. In terms of domain architecture, EF-hand 2 spans Leu546 to Lys581. The segment covering Asn649–Gly664 has biased composition (basic and acidic residues). Disordered regions lie at residues Asn649–Leu691, Ile894–Ala917, Ser935–Pro1306, and Asp1334–Asp1533. Positions Asp690–Phe890 form a coiled coil. 2 stretches are compositionally biased toward basic and acidic residues: residues Ile894–Asp916 and Ser935–Gly947. The span at Thr968–Thr982 shows a compositional bias: low complexity. Residues Glu1026–Asp1209 adopt a coiled-coil conformation. Basic and acidic residues-rich tracts occupy residues Arg1031 to Glu1063, Gly1090 to Lys1164, and Glu1173 to Glu1203. Acidic residues predominate over residues Ala1204 to Pro1218. Residues Ile1221–Thr1237 are compositionally biased toward polar residues. Low complexity predominate over residues Ser1279–Val1293. Positions Asp1348–Asp1367 are enriched in acidic residues. Pro residues predominate over residues Ser1412 to Ser1495. The WH2 domain occupies Arg1500–Thr1517.

Belongs to the PAN1 family. In terms of assembly, component of the PAN1 actin cytoskeleton-regulatory complex.

The protein localises to the cell membrane. Its subcellular location is the endosome membrane. The protein resides in the cytoplasm. It localises to the cytoskeleton. It is found in the actin patch. Its function is as follows. Component of the PAN1 actin cytoskeleton-regulatory complex required for the internalization of endosomes during actin-coupled endocytosis. The complex links the site of endocytosis to the cell membrane-associated actin cytoskeleton. Mediates uptake of external molecules and vacuolar degradation of plasma membrane proteins. Plays a role in the proper organization of the cell membrane-associated actin cytoskeleton and promotes its destabilization. In Neurospora crassa (strain ATCC 24698 / 74-OR23-1A / CBS 708.71 / DSM 1257 / FGSC 987), this protein is Actin cytoskeleton-regulatory complex protein pan-1 (pan-1).